Here is a 297-residue protein sequence, read N- to C-terminus: Coiled-coil domain-containing protein 196 (297 aa).

A coiled-coil region spans residues 83–117 (ESSVMELLKEAEEMKQNLERKNKMLRKEMEMLWNK). The interval 122–161 (EELSDQQKAPQTKNKADLQDGKAPKSPSSPRKTESELEKS) is disordered. Composition is skewed to basic and acidic residues over residues 135-144 (NKADLQDGKA) and 152-161 (RKTESELEKS).

The sequence is that of Coiled-coil domain-containing protein 196 from Homo sapiens (Human).